The following is a 331-amino-acid chain: Autoinducer 2 import system permease protein LsrC (331 aa).

Transmembrane regions (helical) follow at residues 14 to 34 (LIAI…YFSL), 39 to 59 (LVFS…LVML), 70 to 90 (IAGL…NLPV), 93 to 113 (LLTL…VTWL), 115 to 135 (IPAI…MLLL), 157 to 177 (LNIS…AWIL), 206 to 226 (IQII…IVFA), 252 to 272 (GISL…AFFL), and 284 to 304 (LPAW…LIFD).

The protein belongs to the binding-protein-dependent transport system permease family. AraH/RbsC subfamily. The complex is composed of two ATP-binding proteins (LsrA), two transmembrane proteins (LsrC and LsrD) and a solute-binding protein (LsrB).

The protein localises to the cell inner membrane. Its function is as follows. Part of the ABC transporter complex LsrABCD involved in autoinducer 2 (AI-2) import. Probably responsible for the translocation of the substrate across the membrane. The protein is Autoinducer 2 import system permease protein LsrC (lsrC) of Photorhabdus luminescens (Xenorhabdus luminescens).